A 316-amino-acid polypeptide reads, in one-letter code: Thiamine-monophosphate kinase (316 aa).

Mg(2+) contacts are provided by D26, T49, and D50. Substrate is bound at residue D57. D79 contributes to the Mg(2+) binding site. ATP is bound by residues Y109, 126–127, and R151; that span reads GD. Position 127 (D127) interacts with Mg(2+). Residue D198 participates in Mg(2+) binding. S200 lines the ATP pocket. Residue D201 participates in Mg(2+) binding. E251 and F305 together coordinate substrate.

Belongs to the thiamine-monophosphate kinase family.

It carries out the reaction thiamine phosphate + ATP = thiamine diphosphate + ADP. It functions in the pathway cofactor biosynthesis; thiamine diphosphate biosynthesis; thiamine diphosphate from thiamine phosphate: step 1/1. In terms of biological role, catalyzes the ATP-dependent phosphorylation of thiamine-monophosphate (TMP) to form thiamine-pyrophosphate (TPP), the active form of vitamin B1. This chain is Thiamine-monophosphate kinase, found in Rhodopirellula baltica (strain DSM 10527 / NCIMB 13988 / SH1).